Here is a 524-residue protein sequence, read N- to C-terminus: Solute carrier family 2, facilitated glucose transporter member 2 (524 aa).

Residues 1–6 lie on the Cytoplasmic side of the membrane; that stretch reads MTEDKI. The helical transmembrane segment at 7–26 threads the bilayer; that stretch reads TGTLVFAVLTAVLGSFQFGY. Residues 27–89 are Extracellular-facing; the sequence is DIGVINAPQQ…SWAEEETTAS (63 aa). Residue N62 is glycosylated (N-linked (GlcNAc...) asparagine). Residues 90 to 115 traverse the membrane as a helical segment; that stretch reads ASLIIMLWSLSVSIFAIGGMIASFFG. At 116-126 the chain is on the cytoplasmic side; that stretch reads GMLGDRLGRIK. The chain crosses the membrane as a helical span at residues 127-145; sequence AMLVANILSLVGALLMWFS. Topologically, residues 146–150 are extracellular; sequence KLGPS. Residues 151–176 form a helical membrane-spanning segment; that stretch reads HILIISGRGISGLYCGLISGLVPMYI. Topologically, residues 177 to 187 are cytoplasmic; it reads GEIAPTKFRGA. The chain crosses the membrane as a helical span at residues 188-211; sequence IGALHQLAIVTGILVSQIIGLDFL. Position 193 (Q193) interacts with D-glucose. Topologically, residues 212 to 216 are extracellular; that stretch reads LGNHE. A helical transmembrane segment spans residues 217–239; it reads LWHILLGLSAVPAVLQSLMLFFC. Topologically, residues 240-303 are cytoplasmic; the sequence is PESPRYLYIK…LFTNSSYRQP (64 aa). A helical membrane pass occupies residues 304 to 327; the sequence is ILVALMLHMAQQFSGINGIFYYST. D-glucose contacts are provided by residues 314 to 315 and N320; that span reads QQ. At 328–338 the chain is on the extracellular side; sequence SIFQTAGISQP. Residues 339-360 form a helical membrane-spanning segment; the sequence is VYATIGVGAINTIFTALSVFLV. N349 is a D-glucose binding site. Over 361 to 366 the chain is Cytoplasmic; that stretch reads EKAGRR. Residues 367–389 form a helical membrane-spanning segment; it reads SLFLIGMSGMFVCAIFMSVGLVL. Residues 390 to 394 are Extracellular-facing; the sequence is LDKLP. The helical transmembrane segment at 395-413 threads the bilayer; it reads WMSYVSMTAIFLFVSFFEI. D-glucose contacts are provided by E412 and W420. Residues 414–433 lie on the Cytoplasmic side of the membrane; that stretch reads GPGPIPWFMVAEFFSQGPRP. A helical transmembrane segment spans residues 434 to 458; the sequence is AALAMAAFSNWTCNFIIALCFQYIA. Residues 459–463 lie on the Extracellular side of the membrane; the sequence is DFCGP. The helical transmembrane segment at 464 to 482 threads the bilayer; that stretch reads YVFFLFAGVVLVFTLFTFF. The Cytoplasmic portion of the chain corresponds to 483–524; sequence KVPETKGKSFEEIAAEFQKKSGSAQSPKAAVEMEFLGATETV. T523 bears the Phosphothreonine mark.

This sequence belongs to the major facilitator superfamily. Sugar transporter (TC 2.A.1.1) family. Glucose transporter subfamily. Post-translationally, N-glycosylated; required for stability and retention at the cell surface of pancreatic beta cells.

Its subcellular location is the cell membrane. The catalysed reaction is D-glucose(out) = D-glucose(in). It catalyses the reaction D-fructose(out) = D-fructose(in). The enzyme catalyses L-dehydroascorbate(out) = L-dehydroascorbate(in). It carries out the reaction D-galactose(in) = D-galactose(out). D-glucose and maltose competitively inhibit fructose transport. D-glucose, D-fructose and maltose inhibit deoxyglucose transport. Functionally, facilitative hexose transporter that mediates the transport of glucose, fructose and galactose. Likely mediates the bidirectional transfer of glucose across the plasma membrane of hepatocytes and is responsible for uptake of glucose by the beta cells; may comprise part of the glucose-sensing mechanism of the beta cell. May also participate with the Na(+)/glucose cotransporter in the transcellular transport of glucose in the small intestine and kidney. Also able to mediate the transport of dehydroascorbate. The sequence is that of Solute carrier family 2, facilitated glucose transporter member 2 from Sus scrofa (Pig).